A 152-amino-acid polypeptide reads, in one-letter code: Methylglyoxal synthase (152 aa).

The region spanning 6–152 is the MGS-like domain; it reads RTLATEKNIA…YEGYLKERLK (147 aa). Substrate-binding positions include His-19, Lys-23, 45-48, and 65-66; these read TGTT and SG. Asp-71 functions as the Proton donor/acceptor in the catalytic mechanism. His-98 contributes to the substrate binding site.

Belongs to the methylglyoxal synthase family.

The catalysed reaction is dihydroxyacetone phosphate = methylglyoxal + phosphate. Catalyzes the formation of methylglyoxal from dihydroxyacetone phosphate. The protein is Methylglyoxal synthase of Proteus mirabilis (strain HI4320).